Consider the following 100-residue polypeptide: Large ribosomal subunit protein uL23 (100 aa).

The protein belongs to the universal ribosomal protein uL23 family. Part of the 50S ribosomal subunit. Contacts protein L29, and trigger factor when it is bound to the ribosome.

In terms of biological role, one of the early assembly proteins it binds 23S rRNA. One of the proteins that surrounds the polypeptide exit tunnel on the outside of the ribosome. Forms the main docking site for trigger factor binding to the ribosome. The polypeptide is Large ribosomal subunit protein uL23 (Buchnera aphidicola subsp. Acyrthosiphon pisum (strain 5A)).